The following is a 139-amino-acid chain: D-ribose pyranase (139 aa).

Histidine 20 acts as the Proton donor in catalysis. Residues aspartate 28, histidine 106, and 128–130 contribute to the substrate site; that span reads YAN.

Belongs to the RbsD / FucU family. RbsD subfamily. As to quaternary structure, homodecamer.

It localises to the cytoplasm. It catalyses the reaction beta-D-ribopyranose = beta-D-ribofuranose. It participates in carbohydrate metabolism; D-ribose degradation; D-ribose 5-phosphate from beta-D-ribopyranose: step 1/2. In terms of biological role, catalyzes the interconversion of beta-pyran and beta-furan forms of D-ribose. The sequence is that of D-ribose pyranase from Pectobacterium atrosepticum (strain SCRI 1043 / ATCC BAA-672) (Erwinia carotovora subsp. atroseptica).